The chain runs to 110 residues: Iron-sulfur cluster insertion protein ErpA (110 aa).

C38, C102, and C104 together coordinate iron-sulfur cluster.

Belongs to the HesB/IscA family. Homodimer. The cofactor is iron-sulfur cluster.

Required for insertion of 4Fe-4S clusters for at least IspG. The chain is Iron-sulfur cluster insertion protein ErpA from Marinobacter nauticus (strain ATCC 700491 / DSM 11845 / VT8) (Marinobacter aquaeolei).